The sequence spans 320 residues: NADH-ubiquinone oxidoreductase chain 1 (320 aa).

8 helical membrane passes run 3-23, 72-92, 103-123, 147-167, 174-194, 226-246, 255-275, and 295-315; these read LITIINPLTYIVPILIAVAFL, ILLILSPVLALTMAMLIWTPI, LGFLSILAISSMAVNSILWAG, VTLGIILLSILILTGGFTMQL, HIWLLATSWPLMMMWFISTLA, FFLAEYANIISMNLLTCILFI, ELFLINLITKTMILTLTFLWI, and FLPLTMALCLLHVSLLISISG.

The protein belongs to the complex I subunit 1 family.

The protein resides in the mitochondrion inner membrane. It catalyses the reaction a ubiquinone + NADH + 5 H(+)(in) = a ubiquinol + NAD(+) + 4 H(+)(out). Core subunit of the mitochondrial membrane respiratory chain NADH dehydrogenase (Complex I) that is believed to belong to the minimal assembly required for catalysis. Complex I functions in the transfer of electrons from NADH to the respiratory chain. The immediate electron acceptor for the enzyme is believed to be ubiquinone. The sequence is that of NADH-ubiquinone oxidoreductase chain 1 (MT-ND1) from Varanus jobiensis (Peach throat monitor).